Here is a 103-residue protein sequence, read N- to C-terminus: Small ribosomal subunit protein uS14c (103 aa).

This sequence belongs to the universal ribosomal protein uS14 family. Part of the 30S ribosomal subunit.

Its subcellular location is the plastid. The protein resides in the chloroplast. Functionally, binds 16S rRNA, required for the assembly of 30S particles. This Oryza nivara (Indian wild rice) protein is Small ribosomal subunit protein uS14c.